Here is a 446-residue protein sequence, read N- to C-terminus: N-succinylarginine dihydrolase (446 aa).

Substrate contacts are provided by residues 19-28 (AGLSFGNVAS), Asn-110, and 137-138 (HR). Residue Glu-174 is part of the active site. Position 213 (Arg-213) interacts with substrate. The active site involves His-249. Residues Asp-251 and Asn-364 each coordinate substrate. Cys-370 serves as the catalytic Nucleophile.

This sequence belongs to the succinylarginine dihydrolase family. As to quaternary structure, homodimer.

The enzyme catalyses N(2)-succinyl-L-arginine + 2 H2O + 2 H(+) = N(2)-succinyl-L-ornithine + 2 NH4(+) + CO2. Its pathway is amino-acid degradation; L-arginine degradation via AST pathway; L-glutamate and succinate from L-arginine: step 2/5. Its function is as follows. Catalyzes the hydrolysis of N(2)-succinylarginine into N(2)-succinylornithine, ammonia and CO(2). The protein is N-succinylarginine dihydrolase of Burkholderia mallei (strain NCTC 10247).